Here is a 1730-residue protein sequence, read N- to C-terminus: Nebulin-related-anchoring protein (1730 aa).

The 61-residue stretch at 4–64 (QPCSRCGYGV…HAHNPKNNTF (61 aa)) folds into the LIM zinc-binding domain. Nebulin repeat units lie at residues 63-97 (TFTS…QCKS), 156-166 (EYTEDYEQPRG), 175-202 (TPAY…ERIS), 203-237 (RFST…QQRG), 246-273 (TPAY…KEMR), 298-307 (YPEEYEEHRG), 316-343 (TPAY…KMKG), 348-382 (HSLP…SSRG), 389-417 (ETPQ…NHMR), 419-453 (RYEG…HDIV), 487-521 (KYSS…KNKL), 522-556 (NYTL…KTKG), 558-592 (GFEM…KTKG), 602-626 (LLHS…ESKT), 627-661 (RFHL…EYTV), 662-692 (LPED…WMKG), 702-724 (NLEQ…RVDE), 726-760 (KFTS…QSVH), 761-795 (QYTI…NQKA), 797-831 (GFEL…RSRG), 844-869 (QMSH…DTKS), 870-896 (QCHV…VGYK), 901-935 (HFTA…WMKG), 945-963 (NVEQ…KYRQ), 969-1003 (KFTS…NIKH), 1004-1038 (HYTP…KLRD), 1040-1074 (GYKL…KMKG), 1078-1112 (GSRS…HSKA), 1113-1139 (QFHL…QDYK), 1144-1178 (QYTS…FMRG), 1183-1206 (IPGT…KYRQ), 1212-1246 (KYTA…DARH), 1247-1281 (EYTM…NLRA), 1283-1317 (GYKL…KERG), 1321-1355 (GPQS…SSQA), 1356-1390 (QFHL…KFTA), 1391-1421 (LPED…GMKG), 1429-1449 (SPQM…KYRK), 1455-1481 (KFTT…RMYR), 1490-1524 (RYTL…QTRA), 1526-1560 (SYDF…RDRG), 1564-1598 (GYRS…KSRS), 1599-1626 (QFHS…HYRQ), and 1640-1664 (LRHA…LTRG). Position 1081 is a phosphoserine (Ser-1081). Residues 1595–1620 (KSRSQFHSSTDQPGLLQAKRSQQLAS) are disordered. The span at 1596 to 1606 (SRSQFHSSTDQ) shows a compositional bias: polar residues.

As to quaternary structure, interacts with actin, alpha-actinin, KLHL41, TLN1 and VCL. Interacts with CSRP3. Expressed in cardiac and skeletal muscle.

Its function is as follows. May be involved in anchoring the terminal actin filaments in the myofibril to the membrane and in transmitting tension from the myofibrils to the extracellular matrix. This chain is Nebulin-related-anchoring protein, found in Homo sapiens (Human).